The chain runs to 361 residues: Histidinol-phosphate aminotransferase (361 aa).

At K220 the chain carries N6-(pyridoxal phosphate)lysine.

This sequence belongs to the class-II pyridoxal-phosphate-dependent aminotransferase family. Histidinol-phosphate aminotransferase subfamily. Homodimer. The cofactor is pyridoxal 5'-phosphate.

It catalyses the reaction L-histidinol phosphate + 2-oxoglutarate = 3-(imidazol-4-yl)-2-oxopropyl phosphate + L-glutamate. It participates in amino-acid biosynthesis; L-histidine biosynthesis; L-histidine from 5-phospho-alpha-D-ribose 1-diphosphate: step 7/9. The sequence is that of Histidinol-phosphate aminotransferase from Syntrophus aciditrophicus (strain SB).